The chain runs to 150 residues: Large ribosomal subunit protein uL15 (150 aa).

The segment at 18–43 is disordered; sequence IVGRGSSSGWGKTSGKGHKGQQARSG.

Belongs to the universal ribosomal protein uL15 family. Part of the 50S ribosomal subunit.

Its function is as follows. Binds to the 23S rRNA. This chain is Large ribosomal subunit protein uL15, found in Treponema denticola (strain ATCC 35405 / DSM 14222 / CIP 103919 / JCM 8153 / KCTC 15104).